Here is a 260-residue protein sequence, read N- to C-terminus: Thiamine thiazole synthase (260 aa).

NAD(+) is bound by residues Ser-41, Glu-60–Arg-61, Gly-68, Val-131, and His-159–Asp-161. Positions 161 and 176 each coordinate Fe cation. Met-225 contacts NAD(+). Arg-235 is a glycine binding site.

The protein belongs to the THI4 family. Homooctamer; tetramer of dimers. The cofactor is Fe(2+).

It catalyses the reaction hydrogen sulfide + glycine + NAD(+) = ADP-5-ethyl-4-methylthiazole-2-carboxylate + nicotinamide + 3 H2O + H(+). It functions in the pathway cofactor biosynthesis; thiamine diphosphate biosynthesis. Involved in the biosynthesis of the thiazole moiety of thiamine. Catalyzes the conversion of NAD and glycine to adenosine diphosphate 5-(2-hydroxyethyl)-4-methylthiazole-2-carboxylate (ADT), an adenylated thiazole intermediate, using free sulfide as a source of sulfur. In Archaeoglobus fulgidus (strain ATCC 49558 / DSM 4304 / JCM 9628 / NBRC 100126 / VC-16), this protein is Thiamine thiazole synthase.